The primary structure comprises 175 residues: ATP synthase subunit delta (175 aa).

The protein belongs to the ATPase delta chain family. In terms of assembly, F-type ATPases have 2 components, F(1) - the catalytic core - and F(0) - the membrane proton channel. F(1) has five subunits: alpha(3), beta(3), gamma(1), delta(1), epsilon(1). F(0) has three main subunits: a(1), b(2) and c(10-14). The alpha and beta chains form an alternating ring which encloses part of the gamma chain. F(1) is attached to F(0) by a central stalk formed by the gamma and epsilon chains, while a peripheral stalk is formed by the delta and b chains.

It is found in the cell inner membrane. Its function is as follows. F(1)F(0) ATP synthase produces ATP from ADP in the presence of a proton or sodium gradient. F-type ATPases consist of two structural domains, F(1) containing the extramembraneous catalytic core and F(0) containing the membrane proton channel, linked together by a central stalk and a peripheral stalk. During catalysis, ATP synthesis in the catalytic domain of F(1) is coupled via a rotary mechanism of the central stalk subunits to proton translocation. Functionally, this protein is part of the stalk that links CF(0) to CF(1). It either transmits conformational changes from CF(0) to CF(1) or is implicated in proton conduction. The chain is ATP synthase subunit delta from Xanthomonas oryzae pv. oryzae (strain PXO99A).